The chain runs to 382 residues: Heme A synthase (382 aa).

The next 8 membrane-spanning stretches (helical) occupy residues 25-45 (GAVR…VAVG), 112-132 (LLGR…WARG), 138-158 (LLLG…IGWI), 176-196 (LALH…LAAG), 211-231 (VVAG…GLVA), 270-290 (LALV…VAIA), 303-323 (AAAG…GLGI), and 327-347 (LLHV…AVLI). H277 provides a ligand contact to heme. Heme is bound at residue H338.

It belongs to the COX15/CtaA family. Type 2 subfamily. As to quaternary structure, interacts with CtaB. It depends on heme b as a cofactor.

The protein localises to the cell membrane. The catalysed reaction is Fe(II)-heme o + 2 A + H2O = Fe(II)-heme a + 2 AH2. It participates in porphyrin-containing compound metabolism; heme A biosynthesis; heme A from heme O: step 1/1. Its function is as follows. Catalyzes the conversion of heme O to heme A by two successive hydroxylations of the methyl group at C8. The first hydroxylation forms heme I, the second hydroxylation results in an unstable dihydroxymethyl group, which spontaneously dehydrates, resulting in the formyl group of heme A. This Methylorubrum extorquens (strain PA1) (Methylobacterium extorquens) protein is Heme A synthase.